Reading from the N-terminus, the 459-residue chain is Cyclic GMP-AMP synthase-like receptor 2 (459 aa).

ATP-binding positions include S68 and 79-81 (EFD). Mg(2+) is bound by residues E79, D81, and D199. GTP contacts are provided by residues D199 and 248-255 (RSSFYAVE). 252-255 (YAVE) serves as a coordination point for ATP. A Zn(2+)-binding site is contributed by H263. ATP contacts are provided by residues K274 and 288–292 (SYYIK).

Belongs to the mab-21 family. Mg(2+) serves as cofactor. The cofactor is Mn(2+).

It carries out the reaction GTP + ATP = 3',2'-cGAMP + 2 diphosphate. The enzyme catalyses GTP + ATP = 2',3'-cGAMP + 2 diphosphate. The catalysed reaction is GTP + ATP = pppGp(2'-5')A + diphosphate. It catalyses the reaction pppA(2'-5')pG = 3',2'-cGAMP + diphosphate. It carries out the reaction pppGp(2'-5')A = 2',3'-cGAMP + diphosphate. The enzyme activity is specifically activated by some nucleic acid. Nucleotidyltransferase that catalyzes the formation of cyclic GMP-AMP from ATP and GTP and plays a key role in antiviral innate immunity. Directly binds some unknown nucleic acid, activating the nucleotidyltransferase activity, leading to synthesis of both 3',2'-cGAMP and 2',3'-cGAMP second messengers. 3',2'-cGAMP and 2',3'-cGAMP bind to and activate Sting, thereby triggering the antiviral immune response via activation of the NF-kappa-B transcription factor Rel (Relish). The protein is Cyclic GMP-AMP synthase-like receptor 2 of Drosophila melanogaster (Fruit fly).